The primary structure comprises 186 residues: Adenylate kinase (186 aa).

11 to 16 (GAGKGT) contributes to the ATP binding site. Residues 31 to 60 (STGDILRAAVKNGTAMGIEAKKYMDAGDLV) form an NMP region. AMP contacts are provided by residues Thr-32, Arg-37, 58-60 (DLV), 86-89 (GFPR), and Gln-93. Residues 127–137 (GRAIKEGRSDD) are LID. Arg-128 contacts ATP. 2 residues coordinate AMP: Arg-134 and Arg-145. Gly-173 lines the ATP pocket.

Belongs to the adenylate kinase family. As to quaternary structure, monomer.

It localises to the cytoplasm. It catalyses the reaction AMP + ATP = 2 ADP. It participates in purine metabolism; AMP biosynthesis via salvage pathway; AMP from ADP: step 1/1. Functionally, catalyzes the reversible transfer of the terminal phosphate group between ATP and AMP. Plays an important role in cellular energy homeostasis and in adenine nucleotide metabolism. The chain is Adenylate kinase from Leptospira biflexa serovar Patoc (strain Patoc 1 / Ames).